A 342-amino-acid polypeptide reads, in one-letter code: Elongation factor Ts (342 aa).

Residues Thr-79–Val-82 are involved in Mg(2+) ion dislocation from EF-Tu.

This sequence belongs to the EF-Ts family.

Its subcellular location is the cytoplasm. Its function is as follows. Associates with the EF-Tu.GDP complex and induces the exchange of GDP to GTP. It remains bound to the aminoacyl-tRNA.EF-Tu.GTP complex up to the GTP hydrolysis stage on the ribosome. In Lactococcus lactis subsp. cremoris (strain MG1363), this protein is Elongation factor Ts.